We begin with the raw amino-acid sequence, 428 residues long: MTTLSPYDSMTPVTQAAYRAKAAAADLAPLPRAEKDDALLAIADALEVRTSEIVAANAKDVERAREAGTSEAIIDRLTLTPERVRAIAADVRDVVALPDPVGEVVRGSTLPNGIDLRQVRVPLGVVGIIYEARPNVTVDAAALCLKSGNAVLLRGSASAYESNTALVRVLRDAVGGAGLPADAVQLVPGESRDSVRELMRARGLVDVLIPRGGASLIRTVVEESTVPVIETGTGNCHVYVDAQADLDMAVDILINSKAQRPSVCNSAETLLVHQDIAAEFLPRALDALADAGVTVHADERVLAYAKDSKATVVEATTEDWDTEYLSYDIAAAVVDSLDRAVAHIRLWSSGHTEAIVTTSQQAARRFTQLVDSTTVAVNASTRFTDGGEFGFGAEIGISTQKLHARGPMGLPELTSTKYIVTGDGHVRR.

It belongs to the gamma-glutamyl phosphate reductase family.

It localises to the cytoplasm. It catalyses the reaction L-glutamate 5-semialdehyde + phosphate + NADP(+) = L-glutamyl 5-phosphate + NADPH + H(+). It functions in the pathway amino-acid biosynthesis; L-proline biosynthesis; L-glutamate 5-semialdehyde from L-glutamate: step 2/2. Functionally, catalyzes the NADPH-dependent reduction of L-glutamate 5-phosphate into L-glutamate 5-semialdehyde and phosphate. The product spontaneously undergoes cyclization to form 1-pyrroline-5-carboxylate. In Streptomyces avermitilis (strain ATCC 31267 / DSM 46492 / JCM 5070 / NBRC 14893 / NCIMB 12804 / NRRL 8165 / MA-4680), this protein is Gamma-glutamyl phosphate reductase.